The chain runs to 97 residues: Single insulin-like growth factor-binding domain protein-1 (97 aa).

An N-terminal signal peptide occupies residues 1–19 (MKTLFVFAVGIMLSMRASA). The 77-residue stretch at 20–96 (FTCPECRPEL…PEIVGTCVKI (77 aa)) folds into the IGFBP N-terminal domain. O-linked (GalNAc...) threonine glycosylation occurs at Thr-21. Intrachain disulfides connect Cys-22/Cys-45, Cys-25/Cys-47, Cys-30/Cys-48, Cys-36/Cys-51, Cys-59/Cys-75, and Cys-69/Cys-93.

In terms of tissue distribution, expressed in hemocytes.

Its subcellular location is the secreted. In terms of biological role, has a role in the innate immune system. The chain is Single insulin-like growth factor-binding domain protein-1 from Cupiennius salei (American wandering spider).